A 697-amino-acid polypeptide reads, in one-letter code: Polyribonucleotide nucleotidyltransferase (697 aa).

Mg(2+) contacts are provided by Asp-490 and Asp-496. Residues 557–616 enclose the KH domain; sequence PKVVTMTIKPEKIRDVIGPGGKKINEIIDETGVKLDIEQDGTIFIGAVDKDAIARARSII. The S1 motif domain occupies 626–694; it reads GQVYEGKVKR…KQGRVNASHK (69 aa).

The protein belongs to the polyribonucleotide nucleotidyltransferase family. Mg(2+) is required as a cofactor.

The protein resides in the cytoplasm. It catalyses the reaction RNA(n+1) + phosphate = RNA(n) + a ribonucleoside 5'-diphosphate. Its function is as follows. Involved in mRNA degradation. Catalyzes the phosphorolysis of single-stranded polyribonucleotides processively in the 3'- to 5'-direction. The protein is Polyribonucleotide nucleotidyltransferase of Staphylococcus saprophyticus subsp. saprophyticus (strain ATCC 15305 / DSM 20229 / NCIMB 8711 / NCTC 7292 / S-41).